Reading from the N-terminus, the 136-residue chain is Ribosome-binding factor A (136 aa).

This sequence belongs to the RbfA family. As to quaternary structure, monomer. Binds 30S ribosomal subunits, but not 50S ribosomal subunits or 70S ribosomes.

The protein localises to the cytoplasm. Functionally, one of several proteins that assist in the late maturation steps of the functional core of the 30S ribosomal subunit. Associates with free 30S ribosomal subunits (but not with 30S subunits that are part of 70S ribosomes or polysomes). Required for efficient processing of 16S rRNA. May interact with the 5'-terminal helix region of 16S rRNA. In Yersinia enterocolitica serotype O:8 / biotype 1B (strain NCTC 13174 / 8081), this protein is Ribosome-binding factor A.